Consider the following 203-residue polypeptide: ATP-dependent Clp protease proteolytic subunit 2 (203 aa).

Serine 101 functions as the Nucleophile in the catalytic mechanism. The active site involves histidine 126.

It belongs to the peptidase S14 family. In terms of assembly, fourteen ClpP subunits assemble into 2 heptameric rings which stack back to back to give a disk-like structure with a central cavity, resembling the structure of eukaryotic proteasomes.

It localises to the cytoplasm. It carries out the reaction Hydrolysis of proteins to small peptides in the presence of ATP and magnesium. alpha-casein is the usual test substrate. In the absence of ATP, only oligopeptides shorter than five residues are hydrolyzed (such as succinyl-Leu-Tyr-|-NHMec, and Leu-Tyr-Leu-|-Tyr-Trp, in which cleavage of the -Tyr-|-Leu- and -Tyr-|-Trp bonds also occurs).. In terms of biological role, cleaves peptides in various proteins in a process that requires ATP hydrolysis. Has a chymotrypsin-like activity. Plays a major role in the degradation of misfolded proteins. The sequence is that of ATP-dependent Clp protease proteolytic subunit 2 from Prochlorococcus marinus (strain MIT 9312).